We begin with the raw amino-acid sequence, 225 residues long: uncharacterized protein (225 aa).

6 helical membrane passes run 25–45 (MMLA…IPFL), 57–77 (VFLI…ITVA), 83–103 (FIWD…NFAI), 109–129 (LYFH…SLAT), 135–155 (LLTT…FGYV), and 187–207 (IFAL…LIGV).

It is found in the cell membrane. This is an uncharacterized protein from Mycoplasma pneumoniae (strain ATCC 29342 / M129 / Subtype 1) (Mycoplasmoides pneumoniae).